A 177-amino-acid chain; its full sequence is Ribulose bisphosphate carboxylase small subunit, chloroplastic 5 (177 aa).

Residues 1–56 constitute a chloroplast transit peptide; that stretch reads MASSMMASTAAVARAGPAQSSMVAPFNGLRSSVAFPATRKANNDLSTLPSNGGRVS.

The protein belongs to the RuBisCO small chain family. In terms of assembly, heterohexadecamer of 8 large and 8 small subunits.

It localises to the plastid. It is found in the chloroplast. Functionally, ruBisCO catalyzes two reactions: the carboxylation of D-ribulose 1,5-bisphosphate, the primary event in carbon dioxide fixation, as well as the oxidative fragmentation of the pentose substrate. Both reactions occur simultaneously and in competition at the same active site. Although the small subunit is not catalytic it is essential for maximal activity. This is Ribulose bisphosphate carboxylase small subunit, chloroplastic 5 from Lemna gibba (Swollen duckweed).